The sequence spans 278 residues: Tryptophan synthase alpha chain (278 aa).

Residues Glu-49 and Asp-60 each act as proton acceptor in the active site.

Belongs to the TrpA family. Tetramer of two alpha and two beta chains.

It catalyses the reaction (1S,2R)-1-C-(indol-3-yl)glycerol 3-phosphate + L-serine = D-glyceraldehyde 3-phosphate + L-tryptophan + H2O. The protein operates within amino-acid biosynthesis; L-tryptophan biosynthesis; L-tryptophan from chorismate: step 5/5. Its function is as follows. The alpha subunit is responsible for the aldol cleavage of indoleglycerol phosphate to indole and glyceraldehyde 3-phosphate. This is Tryptophan synthase alpha chain from Rhodopirellula baltica (strain DSM 10527 / NCIMB 13988 / SH1).